Consider the following 201-residue polypeptide: dTTP/UTP pyrophosphatase (201 aa).

Aspartate 75 functions as the Proton acceptor in the catalytic mechanism.

Belongs to the Maf family. YhdE subfamily. The cofactor is a divalent metal cation.

The protein resides in the cytoplasm. It carries out the reaction dTTP + H2O = dTMP + diphosphate + H(+). It catalyses the reaction UTP + H2O = UMP + diphosphate + H(+). In terms of biological role, nucleoside triphosphate pyrophosphatase that hydrolyzes dTTP and UTP. May have a dual role in cell division arrest and in preventing the incorporation of modified nucleotides into cellular nucleic acids. In Pseudomonas fluorescens (strain ATCC BAA-477 / NRRL B-23932 / Pf-5), this protein is dTTP/UTP pyrophosphatase.